The chain runs to 69 residues: Large ribosomal subunit protein bL31 (69 aa).

Residues Cys-17, Cys-19, Cys-37, and Cys-40 each coordinate Zn(2+).

The protein belongs to the bacterial ribosomal protein bL31 family. Type A subfamily. In terms of assembly, part of the 50S ribosomal subunit. Zn(2+) is required as a cofactor.

In terms of biological role, binds the 23S rRNA. In Caldicellulosiruptor bescii (strain ATCC BAA-1888 / DSM 6725 / KCTC 15123 / Z-1320) (Anaerocellum thermophilum), this protein is Large ribosomal subunit protein bL31.